The sequence spans 122 residues: Fluoride-specific ion channel FluC 2 (122 aa).

Transmembrane regions (helical) follow at residues 1–21, 33–53, 62–82, and 102–122; these read MAWL…FLLS, PLGT…LLAL, VTLA…TFTY, and GSIL…GSLF. Na(+)-binding residues include glycine 72 and threonine 75.

The protein belongs to the fluoride channel Fluc/FEX (TC 1.A.43) family.

It is found in the cell membrane. It carries out the reaction fluoride(in) = fluoride(out). Its activity is regulated as follows. Na(+) is not transported, but it plays an essential structural role and its presence is essential for fluoride channel function. Its function is as follows. Fluoride-specific ion channel. Important for reducing fluoride concentration in the cell, thus reducing its toxicity. This is Fluoride-specific ion channel FluC 2 from Moorella thermoacetica (strain ATCC 39073 / JCM 9320).